The primary structure comprises 97 residues: MKIRPLHDRVIVKRKEVESKSAGGIMLTGSAAGKSTRGEVLAVGRGRSLDNGEIKALDVKVGDTIIFNDGYGVKVEKIDNEEVLIMSESDILAIVEK.

It belongs to the GroES chaperonin family. In terms of assembly, heptamer of 7 subunits arranged in a ring. Interacts with the chaperonin GroEL.

The protein resides in the cytoplasm. Functionally, together with the chaperonin GroEL, plays an essential role in assisting protein folding. The GroEL-GroES system forms a nano-cage that allows encapsulation of the non-native substrate proteins and provides a physical environment optimized to promote and accelerate protein folding. GroES binds to the apical surface of the GroEL ring, thereby capping the opening of the GroEL channel. The polypeptide is Co-chaperonin GroES (Baumannia cicadellinicola subsp. Homalodisca coagulata).